The primary structure comprises 154 residues: Peptide methionine sulfoxide reductase MsrB (154 aa).

A MsrB domain is found at aspartate 28 to isoleucine 150. Cysteine 67, cysteine 70, cysteine 116, and cysteine 119 together coordinate Zn(2+). Residue cysteine 139 is the Nucleophile of the active site.

It belongs to the MsrB Met sulfoxide reductase family. The cofactor is Zn(2+).

It catalyses the reaction L-methionyl-[protein] + [thioredoxin]-disulfide + H2O = L-methionyl-(R)-S-oxide-[protein] + [thioredoxin]-dithiol. The chain is Peptide methionine sulfoxide reductase MsrB from Vibrio vulnificus (strain YJ016).